Here is a 128-residue protein sequence, read N- to C-terminus: Disintegrin lebein-2-alpha (128 aa).

The signal sequence occupies residues 1–20 (MIQVLLVTICLAVFPFHGSS). Residues 21–46 (IILESGNVNDYEVVYPKKVTLLPTGA) constitute a propeptide that is removed on maturation. The Disintegrin domain maps to 47–111 (MNSANPCCDP…SDCPRNPWKS (65 aa)). 4 disulfide bridges follow: cysteine 53–cysteine 76, cysteine 67–cysteine 73, cysteine 72–cysteine 97, and cysteine 85–cysteine 104. Positions 89-91 (MLD) match the Cell attachment site; atypical (MLD) motif. A propeptide spanning residues 112–128 (EEDEMKWSATAKGSVLM) is cleaved from the precursor.

It belongs to the disintegrin family. Dimeric disintegrin subfamily. As to quaternary structure, heterodimer with subunit beta; disulfide-linked. As to expression, expressed by the venom gland.

Its subcellular location is the secreted. In terms of biological role, inhibits ADP-induced human platelet aggregation. Antagonist of alpha-IIb/beta-3 (ITGA2B/ITGB3). Also avidly binds to the laminin-binding beta-1 integrins (alpha-3/beta-1 (ITGA3/ITGB1), alpha-6/beta-1 (ITGA6/ITGB1), and alpha-7/beta-1 (ITGA7/ITGB1)) in an RGD-independent manner. In Macrovipera lebetinus (Levantine viper), this protein is Disintegrin lebein-2-alpha.